We begin with the raw amino-acid sequence, 101 residues long: MTKSELIEILARRQAHLKADDVDLAVKSLLEMMGGSLSAGDRIEIRGFGSFSLHYRPPRLGRNPKTGESVALPGKHVPHFKPGKELRERVSSVLPLDADPA.

Residues 62-84 (RNPKTGESVALPGKHVPHFKPGK) are disordered.

This sequence belongs to the bacterial histone-like protein family. In terms of assembly, heterodimer of an alpha and a beta chain.

Functionally, this protein is one of the two subunits of integration host factor, a specific DNA-binding protein that functions in genetic recombination as well as in transcriptional and translational control. In Stenotrophomonas maltophilia (strain K279a), this protein is Integration host factor subunit beta.